Reading from the N-terminus, the 179-residue chain is Large ribosomal subunit protein uL6 (179 aa).

It belongs to the universal ribosomal protein uL6 family. As to quaternary structure, part of the 50S ribosomal subunit.

This protein binds to the 23S rRNA, and is important in its secondary structure. It is located near the subunit interface in the base of the L7/L12 stalk, and near the tRNA binding site of the peptidyltransferase center. This Rhodococcus erythropolis (strain PR4 / NBRC 100887) protein is Large ribosomal subunit protein uL6.